A 400-amino-acid chain; its full sequence is Ornithine aminotransferase (400 aa).

Lys254 bears the N6-(pyridoxal phosphate)lysine mark.

The protein belongs to the class-III pyridoxal-phosphate-dependent aminotransferase family. OAT subfamily. The cofactor is pyridoxal 5'-phosphate.

It is found in the cytoplasm. It catalyses the reaction a 2-oxocarboxylate + L-ornithine = L-glutamate 5-semialdehyde + an L-alpha-amino acid. Its pathway is amino-acid biosynthesis; L-proline biosynthesis; L-glutamate 5-semialdehyde from L-ornithine: step 1/1. Its function is as follows. Catalyzes the interconversion of ornithine to glutamate semialdehyde. In Exiguobacterium sp. (strain ATCC BAA-1283 / AT1b), this protein is Ornithine aminotransferase.